The following is a 608-amino-acid chain: Albumin 2 (608 aa).

The signal sequence occupies residues methionine 1 to serine 14. A propeptide spanning residues valine 15–arginine 18 is cleaved from the precursor. 3 Albumin domains span residues serine 19–histidine 205, alanine 206–aspartate 398, and lysine 402–serine 600. 18 disulfide bridges follow: cysteine 26-cysteine 72, cysteine 71-cysteine 80, cysteine 93-cysteine 108, cysteine 107-cysteine 118, cysteine 142-cysteine 187, cysteine 186-cysteine 195, cysteine 218-cysteine 264, cysteine 263-cysteine 271, cysteine 283-cysteine 299, cysteine 298-cysteine 309, cysteine 336-cysteine 381, cysteine 380-cysteine 389, cysteine 414-cysteine 460, cysteine 459-cysteine 471, cysteine 484-cysteine 500, cysteine 499-cysteine 510, cysteine 537-cysteine 582, and cysteine 581-cysteine 590. N-linked (GlcNAc...) asparagine glycosylation occurs at asparagine 501.

It belongs to the ALB/AFP/VDB family. In terms of tissue distribution, plasma.

Its subcellular location is the secreted. Its function is as follows. Binds water, Ca(2+), Na(+), K(+), fatty acids, hormones, bilirubin and drugs. Its main function is the regulation of the colloidal osmotic pressure of blood. The sequence is that of Albumin 2 (alb2) from Salmo salar (Atlantic salmon).